We begin with the raw amino-acid sequence, 143 residues long: UPF0225 protein Reut_A0143 (143 aa).

Belongs to the UPF0225 family.

The sequence is that of UPF0225 protein Reut_A0143 from Cupriavidus pinatubonensis (strain JMP 134 / LMG 1197) (Cupriavidus necator (strain JMP 134)).